We begin with the raw amino-acid sequence, 70 residues long: Large ribosomal subunit protein bL31 (70 aa).

Zn(2+)-binding residues include cysteine 16, cysteine 18, cysteine 38, and cysteine 41.

The protein belongs to the bacterial ribosomal protein bL31 family. Type A subfamily. As to quaternary structure, part of the 50S ribosomal subunit. The cofactor is Zn(2+).

In terms of biological role, binds the 23S rRNA. This chain is Large ribosomal subunit protein bL31, found in Vesicomyosocius okutanii subsp. Calyptogena okutanii (strain HA).